The primary structure comprises 1060 residues: Carbamoyl phosphate synthase large chain (1060 aa).

The interval 1-401 (MPKRTDIKKI…SLLKAVRSLE (401 aa)) is carboxyphosphate synthetic domain. ATP contacts are provided by Arg129, Arg169, Gly175, Gly176, Lys208, Ile210, Glu215, Gly241, Ile242, His243, Gln284, and Glu298. The region spanning 133-327 (KQLMEELEQP…IAKLAAKIAV (195 aa)) is the ATP-grasp 1 domain. Mg(2+)-binding residues include Gln284, Glu298, and Asn300. Mn(2+) is bound by residues Gln284, Glu298, and Asn300. The tract at residues 402–546 (IGAYHNELAE…YSTYEVENES (145 aa)) is oligomerization domain. The carbamoyl phosphate synthetic domain stretch occupies residues 547 to 929 (NVSKKPSVLV…ALYKAFEASG (383 aa)). In terms of domain architecture, ATP-grasp 2 spans 671-861 (EQALQELAIP…MAQVATKAIL (191 aa)). 10 residues coordinate ATP: Arg707, Ser746, Leu748, Glu752, Gly777, Val778, His779, Ser780, Gln820, and Glu832. Mg(2+) is bound by residues Gln820, Glu832, and Asn834. 3 residues coordinate Mn(2+): Gln820, Glu832, and Asn834. Residues 930–1060 (LHLPSYGAVL…ESRAFTTEAI (131 aa)) form the MGS-like domain. The allosteric domain stretch occupies residues 930 to 1060 (LHLPSYGAVL…ESRAFTTEAI (131 aa)).

It belongs to the CarB family. Composed of two chains; the small (or glutamine) chain promotes the hydrolysis of glutamine to ammonia, which is used by the large (or ammonia) chain to synthesize carbamoyl phosphate. Tetramer of heterodimers (alpha,beta)4. The cofactor is Mg(2+). It depends on Mn(2+) as a cofactor.

The enzyme catalyses hydrogencarbonate + L-glutamine + 2 ATP + H2O = carbamoyl phosphate + L-glutamate + 2 ADP + phosphate + 2 H(+). It carries out the reaction hydrogencarbonate + NH4(+) + 2 ATP = carbamoyl phosphate + 2 ADP + phosphate + 2 H(+). The protein operates within amino-acid biosynthesis; L-arginine biosynthesis; carbamoyl phosphate from bicarbonate: step 1/1. Its pathway is pyrimidine metabolism; UMP biosynthesis via de novo pathway; (S)-dihydroorotate from bicarbonate: step 1/3. Its function is as follows. Large subunit of the glutamine-dependent carbamoyl phosphate synthetase (CPSase). CPSase catalyzes the formation of carbamoyl phosphate from the ammonia moiety of glutamine, carbonate, and phosphate donated by ATP, constituting the first step of 2 biosynthetic pathways, one leading to arginine and/or urea and the other to pyrimidine nucleotides. The large subunit (synthetase) binds the substrates ammonia (free or transferred from glutamine from the small subunit), hydrogencarbonate and ATP and carries out an ATP-coupled ligase reaction, activating hydrogencarbonate by forming carboxy phosphate which reacts with ammonia to form carbamoyl phosphate. The polypeptide is Carbamoyl phosphate synthase large chain (Enterococcus faecalis (strain ATCC 700802 / V583)).